We begin with the raw amino-acid sequence, 273 residues long: 4-hydroxy-tetrahydrodipicolinate reductase (273 aa).

Residues 12 to 17 and E38 contribute to the NAD(+) site; that span reads GAGGRM. R39 provides a ligand contact to NADP(+). NAD(+) is bound by residues 102-104 and 126-129; these read GTT and AANF. Catalysis depends on H159, which acts as the Proton donor/acceptor. H160 contacts (S)-2,3,4,5-tetrahydrodipicolinate. K163 serves as the catalytic Proton donor. 169 to 170 contributes to the (S)-2,3,4,5-tetrahydrodipicolinate binding site; it reads GT.

The protein belongs to the DapB family. Homotetramer.

The protein localises to the cytoplasm. It carries out the reaction (S)-2,3,4,5-tetrahydrodipicolinate + NAD(+) + H2O = (2S,4S)-4-hydroxy-2,3,4,5-tetrahydrodipicolinate + NADH + H(+). It catalyses the reaction (S)-2,3,4,5-tetrahydrodipicolinate + NADP(+) + H2O = (2S,4S)-4-hydroxy-2,3,4,5-tetrahydrodipicolinate + NADPH + H(+). It functions in the pathway amino-acid biosynthesis; L-lysine biosynthesis via DAP pathway; (S)-tetrahydrodipicolinate from L-aspartate: step 4/4. Its function is as follows. Catalyzes the conversion of 4-hydroxy-tetrahydrodipicolinate (HTPA) to tetrahydrodipicolinate. This Enterobacter sp. (strain 638) protein is 4-hydroxy-tetrahydrodipicolinate reductase.